The chain runs to 208 residues: Glutathione S-transferase 2 (208 aa).

The GST N-terminal domain occupies 1–78 (MSYKLTYFSI…HLARKYNLNG (78 aa)). Glutathione is bound by residues tyrosine 7, lysine 42, 49 to 50 (QL), and 62 to 63 (QS). The 121-residue stretch at 80 to 200 (NEMETTYIDM…YCEKRDAAKV (121 aa)) folds into the GST C-terminal domain.

Belongs to the GST superfamily. Pi family. As to quaternary structure, homodimer. In terms of tissue distribution, hypodermis, wall of the seminal receptacle and spermatozoa of adult worms.

It catalyses the reaction RX + glutathione = an S-substituted glutathione + a halide anion + H(+). Functionally, appears to play a central role in the parasite detoxification system. This Onchocerca volvulus protein is Glutathione S-transferase 2 (GST2).